The primary structure comprises 256 residues: tRNA (guanine-N(7)-)-methyltransferase (256 aa).

S-adenosyl-L-methionine is bound by residues Glu-85, Glu-110, Asp-137, and Asp-159. Asp-159 is a catalytic residue. Substrate contacts are provided by Lys-163 and Asp-195.

It belongs to the class I-like SAM-binding methyltransferase superfamily. TrmB family.

It carries out the reaction guanosine(46) in tRNA + S-adenosyl-L-methionine = N(7)-methylguanosine(46) in tRNA + S-adenosyl-L-homocysteine. Its pathway is tRNA modification; N(7)-methylguanine-tRNA biosynthesis. Its function is as follows. Catalyzes the formation of N(7)-methylguanine at position 46 (m7G46) in tRNA. In Rhodopseudomonas palustris (strain HaA2), this protein is tRNA (guanine-N(7)-)-methyltransferase.